The following is a 78-amino-acid chain: DNA-directed RNA polymerase subunit Rpo5 (78 aa).

It belongs to the archaeal Rpo5/eukaryotic RPB5 RNA polymerase subunit family. Part of the RNA polymerase complex.

The protein resides in the cytoplasm. The enzyme catalyses RNA(n) + a ribonucleoside 5'-triphosphate = RNA(n+1) + diphosphate. Functionally, DNA-dependent RNA polymerase (RNAP) catalyzes the transcription of DNA into RNA using the four ribonucleoside triphosphates as substrates. In Methanothrix thermoacetophila (strain DSM 6194 / JCM 14653 / NBRC 101360 / PT) (Methanosaeta thermophila), this protein is DNA-directed RNA polymerase subunit Rpo5.